The primary structure comprises 261 residues: uncharacterized protein (261 aa).

This is an uncharacterized protein from Bacillus subtilis (strain 168).